We begin with the raw amino-acid sequence, 51 residues long: uncharacterized protein (51 aa).

The interval 1 to 51 is disordered; that stretch reads MARTNVKLCPPKRSKRPSNSRSKSTSHSNRRSLNSLRRTRTSRRSNNGKFT. The segment covering 19–36 has biased composition (low complexity); the sequence is NSRSKSTSHSNRRSLNSL.

This is an uncharacterized protein from Bdellovibrio bacteriovorus (Bacteriophage phiMH2K).